Here is a 528-residue protein sequence, read N- to C-terminus: Putative B3 domain-containing protein REM15 (528 aa).

DNA-binding regions (TF-B3) lie at residues 3–95 (HQHF…LGPS) and 135–231 (CFVA…LPNE). The segment at 234–253 (EEANEVSLPEEPESDAERNL) is disordered. 2 consecutive DNA-binding regions (TF-B3) follow at residues 279-376 (CFVA…IPNE) and 425-522 (QSSL…FCSK).

It is found in the nucleus. This is Putative B3 domain-containing protein REM15 (REM15.15) from Arabidopsis thaliana (Mouse-ear cress).